A 199-amino-acid polypeptide reads, in one-letter code: NAD(P)H dehydrogenase (quinone) (199 aa).

The Flavodoxin-like domain maps to 4-190; the sequence is VLVLYYSAYG…AGARYQGRVI (187 aa). Residues 10-15 and 78-80 contribute to the FMN site; these read SAYGHI and TRF. Residue Y12 coordinates NAD(+). Substrate is bound at residue W98. Residues 113 to 119 and H134 each bind FMN; that span reads STATQHG.

The protein belongs to the WrbA family. Requires FMN as cofactor.

It carries out the reaction a quinone + NADH + H(+) = a quinol + NAD(+). The enzyme catalyses a quinone + NADPH + H(+) = a quinol + NADP(+). In Bradyrhizobium sp. (strain ORS 278), this protein is NAD(P)H dehydrogenase (quinone).